The following is a 236-amino-acid chain: Purine nucleoside phosphorylase (236 aa).

Residue His-5 coordinates a purine D-ribonucleoside. Phosphate contacts are provided by residues Gly-21, Arg-25, Arg-43, and 86-89 (RYGT). A purine D-ribonucleoside contacts are provided by residues Glu-163, 180 to 182 (EME), and 204 to 205 (SD).

It belongs to the PNP/UDP phosphorylase family. As to quaternary structure, homohexamer; disulfide-linked. Trimer of homodimers, with three symmetric intersubunit disulfide bonds linking the dimers to one another.

The catalysed reaction is S-methyl-5'-thioadenosine + phosphate = 5-(methylsulfanyl)-alpha-D-ribose 1-phosphate + adenine. It catalyses the reaction a purine D-ribonucleoside + phosphate = a purine nucleobase + alpha-D-ribose 1-phosphate. The enzyme catalyses a purine 2'-deoxy-D-ribonucleoside + phosphate = a purine nucleobase + 2-deoxy-alpha-D-ribose 1-phosphate. It participates in purine metabolism; purine nucleoside salvage. Its function is as follows. Cleavage of guanosine or inosine to respective bases and sugar-1-phosphate molecules. Cleaves inosine, guanosine, and adenosine with a better efficiency than MTA. This is Purine nucleoside phosphorylase from Saccharolobus solfataricus (strain ATCC 35092 / DSM 1617 / JCM 11322 / P2) (Sulfolobus solfataricus).